The sequence spans 221 residues: UPF0502 protein XOO0224 (221 aa).

Belongs to the UPF0502 family.

This is UPF0502 protein XOO0224 from Xanthomonas oryzae pv. oryzae (strain MAFF 311018).